Reading from the N-terminus, the 202-residue chain is PITH domain-containing protein 1 (202 aa).

Positions 11 to 184 (SHGVDDGIEY…IVNTVYESKP (174 aa)) constitute a PITH domain.

Belongs to the PITHD1 family.

The polypeptide is PITH domain-containing protein 1 (Dictyostelium discoideum (Social amoeba)).